Consider the following 427-residue polypeptide: Serine--tRNA ligase (427 aa).

T230–E232 contacts L-serine. An ATP-binding site is contributed by R261–E263. L-serine is bound at residue E284. Residue E348–S351 coordinates ATP. S384 serves as a coordination point for L-serine.

The protein belongs to the class-II aminoacyl-tRNA synthetase family. Type-1 seryl-tRNA synthetase subfamily. Homodimer. The tRNA molecule binds across the dimer.

Its subcellular location is the cytoplasm. It carries out the reaction tRNA(Ser) + L-serine + ATP = L-seryl-tRNA(Ser) + AMP + diphosphate + H(+). It catalyses the reaction tRNA(Sec) + L-serine + ATP = L-seryl-tRNA(Sec) + AMP + diphosphate + H(+). Its pathway is aminoacyl-tRNA biosynthesis; selenocysteinyl-tRNA(Sec) biosynthesis; L-seryl-tRNA(Sec) from L-serine and tRNA(Sec): step 1/1. Catalyzes the attachment of serine to tRNA(Ser). Is also able to aminoacylate tRNA(Sec) with serine, to form the misacylated tRNA L-seryl-tRNA(Sec), which will be further converted into selenocysteinyl-tRNA(Sec). This Syntrophomonas wolfei subsp. wolfei (strain DSM 2245B / Goettingen) protein is Serine--tRNA ligase.